Here is a 491-residue protein sequence, read N- to C-terminus: Protein SET DOMAIN GROUP 40 (491 aa).

Residues 36–278 enclose the SET domain; the sequence is HSLSVSDFPD…LGEQVLLCYG (243 aa).

This sequence belongs to the class V-like SAM-binding methyltransferase superfamily.

This chain is Protein SET DOMAIN GROUP 40 (SDG40), found in Arabidopsis thaliana (Mouse-ear cress).